A 133-amino-acid chain; its full sequence is MAENLRLEVVTPEKTVVSDDAQIVMAPGVLGEFGVLVNHTPFLTSLMPGALHYKDTGEKEHLLFVSDGFAEVLPDRITVLVESAERKEDIDLQRAEAARERAEKRLESGEDVDFVRAKAALTRAIQRIRVAGA.

Belongs to the ATPase epsilon chain family. F-type ATPases have 2 components, CF(1) - the catalytic core - and CF(0) - the membrane proton channel. CF(1) has five subunits: alpha(3), beta(3), gamma(1), delta(1), epsilon(1). CF(0) has three main subunits: a, b and c.

The protein resides in the cell inner membrane. Produces ATP from ADP in the presence of a proton gradient across the membrane. This is ATP synthase epsilon chain from Desulfosudis oleivorans (strain DSM 6200 / JCM 39069 / Hxd3) (Desulfococcus oleovorans).